The primary structure comprises 341 residues: Phenylalanine--tRNA ligase alpha subunit (341 aa).

Glu259 is a binding site for Mg(2+).

This sequence belongs to the class-II aminoacyl-tRNA synthetase family. Phe-tRNA synthetase alpha subunit type 1 subfamily. In terms of assembly, tetramer of two alpha and two beta subunits. Requires Mg(2+) as cofactor.

The protein localises to the cytoplasm. The catalysed reaction is tRNA(Phe) + L-phenylalanine + ATP = L-phenylalanyl-tRNA(Phe) + AMP + diphosphate + H(+). This chain is Phenylalanine--tRNA ligase alpha subunit, found in Mycobacterium bovis (strain ATCC BAA-935 / AF2122/97).